The primary structure comprises 143 residues: Transcriptional regulator MraZ (143 aa).

2 consecutive SpoVT-AbrB domains span residues 5–47 and 76–119; these read EYSH…PMAV and ALEA…SAEN.

Belongs to the MraZ family. In terms of assembly, forms oligomers.

It localises to the cytoplasm. It is found in the nucleoid. This chain is Transcriptional regulator MraZ, found in Leuconostoc mesenteroides subsp. mesenteroides (strain ATCC 8293 / DSM 20343 / BCRC 11652 / CCM 1803 / JCM 6124 / NCDO 523 / NBRC 100496 / NCIMB 8023 / NCTC 12954 / NRRL B-1118 / 37Y).